Consider the following 180-residue polypeptide: Photosystem II extrinsic protein V (180 aa).

The first 40 residues, 1–40 (MFSKAFSFQKVFAPARRRLLVLLLAALMAGFGWGLAPVFA), serve as a signal peptide directing secretion. The heme c site is built by C73, C76, H77, and H128.

This sequence belongs to the cytochrome c family. PsbV subfamily. In terms of assembly, PSII is composed of 1 copy each of membrane proteins PsbA, PsbB, PsbC, PsbD, PsbE, PsbF, PsbH, PsbI, PsbJ, PsbK, PsbL, PsbM, PsbT, PsbX, PsbY, PsbZ, Psb30/Ycf12, peripheral proteins PsbO, CyanoQ (PsbQ), PsbU, PsbV and a large number of cofactors. It forms dimeric complexes. Requires heme c as cofactor.

It is found in the cellular thylakoid membrane. One of the extrinsic, lumenal subunits of photosystem II (PSII). PSII is a light-driven water plastoquinone oxidoreductase, using light energy to abstract electrons from H(2)O, generating a proton gradient subsequently used for ATP formation. The extrinsic proteins stabilize the structure of photosystem II oxygen-evolving complex (OEC), the ion environment of oxygen evolution and protect the OEC against heat-induced inactivation. Low-potential cytochrome c that plays a role in the OEC of PSII. In Synechococcus sp. (strain JA-2-3B'a(2-13)) (Cyanobacteria bacterium Yellowstone B-Prime), this protein is Photosystem II extrinsic protein V.